The chain runs to 239 residues: tRNA uridine(34) hydroxylase (239 aa).

In terms of domain architecture, Rhodanese spans 124 to 214 (QGRELVMLDT…GILKYFEETD (91 aa)). Cys-178 acts as the Cysteine persulfide intermediate in catalysis.

It belongs to the TrhO family.

It catalyses the reaction uridine(34) in tRNA + AH2 + O2 = 5-hydroxyuridine(34) in tRNA + A + H2O. Functionally, catalyzes oxygen-dependent 5-hydroxyuridine (ho5U) modification at position 34 in tRNAs. The sequence is that of tRNA uridine(34) hydroxylase from Bordetella parapertussis (strain 12822 / ATCC BAA-587 / NCTC 13253).